A 245-amino-acid polypeptide reads, in one-letter code: tRNA1(Val) (adenine(37)-N6)-methyltransferase (245 aa).

It belongs to the methyltransferase superfamily. tRNA (adenine-N(6)-)-methyltransferase family.

The protein resides in the cytoplasm. The enzyme catalyses adenosine(37) in tRNA1(Val) + S-adenosyl-L-methionine = N(6)-methyladenosine(37) in tRNA1(Val) + S-adenosyl-L-homocysteine + H(+). Specifically methylates the adenine in position 37 of tRNA(1)(Val) (anticodon cmo5UAC). The polypeptide is tRNA1(Val) (adenine(37)-N6)-methyltransferase (Salmonella enteritidis PT4 (strain P125109)).